A 347-amino-acid chain; its full sequence is NADH-ubiquinone oxidoreductase chain 2 (347 aa).

Transmembrane regions (helical) follow at residues 3–23 (PMTFTVLLATIMSGTSIVLLS), 25–45 (HWFMTWLGFEMNMMAIIPVLM), 59–79 (YFLTQATASMILVLAIIINTM), 96–116 (ILITLALVMKLGLAPFHFWVP), 127–147 (GLILLTWQKIAPLSLLYQIYP), 149–169 (LNTNLLLTMSLLSIMIGGWGG), 178–198 (IMAYSSIAHMGWMIAIMTYNP), 201–221 (SLLNLIIYITMTSSMFMLLII), 239–259 (IVTTMMLISLLSLGGLPPLTG), 274–294 (NSLILPTLMSILALLNLFFYM), and 326–346 (TAPLISISTMILPLTPLLITL).

The protein belongs to the complex I subunit 2 family. In terms of assembly, core subunit of respiratory chain NADH dehydrogenase (Complex I) which is composed of 45 different subunits. Interacts with TMEM242.

It localises to the mitochondrion inner membrane. The catalysed reaction is a ubiquinone + NADH + 5 H(+)(in) = a ubiquinol + NAD(+) + 4 H(+)(out). In terms of biological role, core subunit of the mitochondrial membrane respiratory chain NADH dehydrogenase (Complex I) which catalyzes electron transfer from NADH through the respiratory chain, using ubiquinone as an electron acceptor. Essential for the catalytic activity and assembly of complex I. The protein is NADH-ubiquinone oxidoreductase chain 2 of Sylvisorex ollula (Greater forest shrew).